The primary structure comprises 169 residues: MRLLGLDPGLRITGWGVIEVTGNRIGHVADGVVRSDDRLSLAARLAQLHGGIVAVLKAYEPVEAAVEETFVNRNPASTLKLGQARGAVMLAPALAGLVVAEYQPSVVKKAVVGTGGAAKDQVGMMIRTLLPGATLETADAADALAIAICHAHYRAGALSLALARAGGGR.

Residues D7, E67, and D139 contribute to the active site. Mg(2+) is bound by residues D7, E67, and D139.

The protein belongs to the RuvC family. Homodimer which binds Holliday junction (HJ) DNA. The HJ becomes 2-fold symmetrical on binding to RuvC with unstacked arms; it has a different conformation from HJ DNA in complex with RuvA. In the full resolvosome a probable DNA-RuvA(4)-RuvB(12)-RuvC(2) complex forms which resolves the HJ. Requires Mg(2+) as cofactor.

It localises to the cytoplasm. It catalyses the reaction Endonucleolytic cleavage at a junction such as a reciprocal single-stranded crossover between two homologous DNA duplexes (Holliday junction).. In terms of biological role, the RuvA-RuvB-RuvC complex processes Holliday junction (HJ) DNA during genetic recombination and DNA repair. Endonuclease that resolves HJ intermediates. Cleaves cruciform DNA by making single-stranded nicks across the HJ at symmetrical positions within the homologous arms, yielding a 5'-phosphate and a 3'-hydroxyl group; requires a central core of homology in the junction. The consensus cleavage sequence is 5'-(A/T)TT(C/G)-3'. Cleavage occurs on the 3'-side of the TT dinucleotide at the point of strand exchange. HJ branch migration catalyzed by RuvA-RuvB allows RuvC to scan DNA until it finds its consensus sequence, where it cleaves and resolves the cruciform DNA. The polypeptide is Crossover junction endodeoxyribonuclease RuvC (Rhodospirillum rubrum (strain ATCC 11170 / ATH 1.1.1 / DSM 467 / LMG 4362 / NCIMB 8255 / S1)).